Consider the following 284-residue polypeptide: 2-dehydro-3-deoxyphosphooctonate aldolase (284 aa).

Belongs to the KdsA family.

It localises to the cytoplasm. The enzyme catalyses D-arabinose 5-phosphate + phosphoenolpyruvate + H2O = 3-deoxy-alpha-D-manno-2-octulosonate-8-phosphate + phosphate. It participates in carbohydrate biosynthesis; 3-deoxy-D-manno-octulosonate biosynthesis; 3-deoxy-D-manno-octulosonate from D-ribulose 5-phosphate: step 2/3. It functions in the pathway bacterial outer membrane biogenesis; lipopolysaccharide biosynthesis. In Pseudoalteromonas translucida (strain TAC 125), this protein is 2-dehydro-3-deoxyphosphooctonate aldolase.